Here is a 473-residue protein sequence, read N- to C-terminus: Sarcalumenin (473 aa).

The N-terminal stretch at 1–20 (MRALVLLGCLLASLLFSGQA) is a signal peptide. Residues 90 to 331 (ITSKPMVLFL…IENRLENKIA (242 aa)) enclose the Dynamin-type G domain. The segment at 100-107 (GPWSVGKS) is G1 motif. The interval 128-129 (EP) is G2 motif. A G3 motif region spans residues 190 to 193 (DTPG). Residues 255–258 (NKAD) are G4 motif. P278 is a region of interest (G5 motif). N-linked (GlcNAc...) asparagine glycosylation is found at N281 and N389.

The protein belongs to the TRAFAC class dynamin-like GTPase superfamily. Dynamin/Fzo/YdjA family. Post-translationally, N-glycosylated.

The protein resides in the sarcoplasmic reticulum lumen. It is found in the sarcoplasmic reticulum membrane. This is Sarcalumenin (SRL) from Homo sapiens (Human).